Reading from the N-terminus, the 365-residue chain is S-type anion channel SLAH4 (365 aa).

Over 1 to 25 the chain is Cytoplasmic; that stretch reads MEIPSQEIHIMIDNTISRRKERKTN. The chain crosses the membrane as a helical span at residues 26 to 46; the sequence is LADAEPIVLMSVLSSLHAGYF. At 47–73 the chain is on the extracellular side; it reads RISLSLCSQALLWKIMVHLHSELPSMA. A helical membrane pass occupies residues 74–94; it reads YYLLWYLALATQVSLCFLYAF. Topologically, residues 95–106 are cytoplasmic; the sequence is KCIFLFDMVKEE. Residues 107–127 form a helical membrane-spanning segment; the sequence is FSHYIGVNYLYAPSISCLLLL. Over 128 to 131 the chain is Extracellular; sequence QSAP. Residues 132–152 form a helical membrane-spanning segment; the sequence is MIEPHSVLYQTLFWIFAVPVL. At 153–168 the chain is on the cytoplasmic side; sequence TLDTKLYGQWFTTEKR. A helical membrane pass occupies residues 169 to 189; it reads FLSIMANPASQVSVIANLVAA. Residues 190–199 lie on the Extracellular side of the membrane; sequence RGAAEMGWKE. A helical membrane pass occupies residues 200–220; the sequence is CALCLFSLGMVHYLVIFVTLY. Residues 221–235 lie on the Cytoplasmic side of the membrane; the sequence is QRLPGGNNFPTTLRP. Residues 236–256 form a helical membrane-spanning segment; that stretch reads VFFLFFAAPATASLAWNSICG. Residue asparagine 257 is a topological domain, extracellular. The chain crosses the membrane as a helical span at residues 258-278; sequence FDTIAKMLFFLSLFIFISLVC. Residues 279–291 lie on the Cytoplasmic side of the membrane; that stretch reads RPNLLKKSIKRFN. The chain crosses the membrane as a helical span at residues 292–312; sequence VAWWAYSFPITFLALNSVQYA. Topologically, residues 313 to 321 are extracellular; sequence QEVKDHVAS. The helical transmembrane segment at 322 to 342 threads the bilayer; it reads VLMFIFSSMSVLIFISVMLLT. The Cytoplasmic segment spans residues 343-365; sequence AANSKRLLRRDHVLWSSTGPKDK.

Belongs to the SLAC1 S-type anion channel family. As to quaternary structure, homotrimer.

Its subcellular location is the cell membrane. Functionally, slow, weak voltage-dependent S-type anion efflux channel involved in maintenance of anion homeostasis. This Arabidopsis thaliana (Mouse-ear cress) protein is S-type anion channel SLAH4 (SLAH4).